A 63-amino-acid chain; its full sequence is Overexpressed in colon carcinoma 1 protein homolog (63 aa).

Residues 1 to 10 show a composition bias toward polar residues; it reads MGCGNSTATS. A disordered region spans residues 1-37; it reads MGCGNSTATSAAAGRGKPGAVKDATEDSITEDDKRRN.

The protein belongs to the OCC1 family.

In Rattus norvegicus (Rat), this protein is Overexpressed in colon carcinoma 1 protein homolog.